We begin with the raw amino-acid sequence, 253 residues long: Imidazole glycerol phosphate synthase subunit HisF (253 aa).

Active-site residues include Asp-13 and Asp-132.

Belongs to the HisA/HisF family. As to quaternary structure, heterodimer of HisH and HisF.

Its subcellular location is the cytoplasm. The catalysed reaction is 5-[(5-phospho-1-deoxy-D-ribulos-1-ylimino)methylamino]-1-(5-phospho-beta-D-ribosyl)imidazole-4-carboxamide + L-glutamine = D-erythro-1-(imidazol-4-yl)glycerol 3-phosphate + 5-amino-1-(5-phospho-beta-D-ribosyl)imidazole-4-carboxamide + L-glutamate + H(+). It functions in the pathway amino-acid biosynthesis; L-histidine biosynthesis; L-histidine from 5-phospho-alpha-D-ribose 1-diphosphate: step 5/9. IGPS catalyzes the conversion of PRFAR and glutamine to IGP, AICAR and glutamate. The HisF subunit catalyzes the cyclization activity that produces IGP and AICAR from PRFAR using the ammonia provided by the HisH subunit. The sequence is that of Imidazole glycerol phosphate synthase subunit HisF from Aliarcobacter butzleri (strain RM4018) (Arcobacter butzleri).